A 951-amino-acid chain; its full sequence is MMGANSTEWHGQSVEQVTELLGTDVERGLKESVVGQLQKQFGPNELKGQRGVNPWKVLLAQFTNGLTVILLIATVVSFAVQDHAEGGVLAFVIIFNASVGFVQEYRAEKTMDALRRMASPTAKVIRDGGLDRISSPGVVPGDIIVFEVGDVVPADCRLIEVLNLEVDEAMLTGESLPVAKTVEAIKGENATVGDRLNMVYSSTILTKGRGKGIAVATGMSTEIGKITKSISETGQSSTPMQKRLNRMAYILFGISLVLAVIVFAVNKFEFNTDIIIYAVSLGIAVIPEGLIAVITIVMALGVRRMASQQALVRKLVALESLQAVTNICSDKTGTLTQGKMTVTTLWLPGMEDQYSISGNGWETSGEISVREQPIDAQECLSDLRFRLLVECSALCNTANIVEASEGKVWGDPTEIALQVLAYKLQMGKPSFRSRKEPITEYPFSSAEKRMSMLYRDVERDAFEIYTKGAENVLAICDRLLEKGEEVEISSRDEFMQSVSAQIQIMAKQGLRVLVVAYRTVSEKEMAKSVSKWERVDVERNMTFLGLVGIRDTPRPESRIAVDQCYEAGIIVHMLTGDHHDTALAIAREVGIIRPAPNSADESVVPMSNPVMTAAEFDALSEEQIDDLNELPLVIARCTPATKVRMIEALHRRKKFAAMTGDGVNDAPSLKKADVGIAMGAGSDVAKQSSEIVLTDNNFATIVMAVSEGRRIFSNIRKFILHLVSTNVGEVIVLIIGLAFKDRNGVSVFPLAPVQILFMNMVTSTPPAMALGVEAASKDTMKVPPHTKGLFGKEVLADMMVYGIIMGSLILVDWVLVIYAFGDSQLGLECNSDRMLNECNTVFRARSTIMVALIWMLLLHAYNCRHPRASLFTAEGGGASKLFSNRLLVWSVLLGSLMPIPTVYIPTLNTKIFKQETISWEWSIVVVSVVAFFFLSELYKLIKRNVMTSRVI.

Topologically, residues 1-57 (MMGANSTEWHGQSVEQVTELLGTDVERGLKESVVGQLQKQFGPNELKGQRGVNPWKV) are cytoplasmic. Residues 58–78 (LLAQFTNGLTVILLIATVVSF) traverse the membrane as a helical segment. Residues 79–82 (AVQD) are Extracellular-facing. The helical transmembrane segment at 83–103 (HAEGGVLAFVIIFNASVGFVQ) threads the bilayer. Residues 104–247 (EYRAEKTMDA…TPMQKRLNRM (144 aa)) lie on the Cytoplasmic side of the membrane. Residues 248–268 (AYILFGISLVLAVIVFAVNKF) form a helical membrane-spanning segment. The Extracellular portion of the chain corresponds to 269–273 (EFNTD). A helical transmembrane segment spans residues 274 to 294 (IIIYAVSLGIAVIPEGLIAVI). Topologically, residues 295–717 (TIVMALGVRR…GRRIFSNIRK (423 aa)) are cytoplasmic. D330 serves as the catalytic 4-aspartylphosphate intermediate. Positions 330 and 332 each coordinate Mg(2+). The ATP site is built by T332, E414, K467, R511, T575, G576, D577, R636, and K642. D661 lines the Mg(2+) pocket. N664 is a binding site for ATP. The helical transmembrane segment at 718-738 (FILHLVSTNVGEVIVLIIGLA) threads the bilayer. At 739 to 743 (FKDRN) the chain is on the extracellular side. Residues 744 to 764 (GVSVFPLAPVQILFMNMVTST) traverse the membrane as a helical segment. At 765–799 (PPAMALGVEAASKDTMKVPPHTKGLFGKEVLADMM) the chain is on the cytoplasmic side. A helical membrane pass occupies residues 800 to 820 (VYGIIMGSLILVDWVLVIYAF). The Extracellular portion of the chain corresponds to 821 to 840 (GDSQLGLECNSDRMLNECNT). Residues 841–861 (VFRARSTIMVALIWMLLLHAY) traverse the membrane as a helical segment. At 862–885 (NCRHPRASLFTAEGGGASKLFSNR) the chain is on the cytoplasmic side. Residues 886 to 906 (LLVWSVLLGSLMPIPTVYIPT) traverse the membrane as a helical segment. Topologically, residues 907-916 (LNTKIFKQET) are extracellular. The helical transmembrane segment at 917–937 (ISWEWSIVVVSVVAFFFLSEL) threads the bilayer. The Cytoplasmic segment spans residues 938-951 (YKLIKRNVMTSRVI).

It belongs to the cation transport ATPase (P-type) (TC 3.A.3) family. Type IID subfamily. It depends on Mg(2+) as a cofactor. The active site is phosphorylated in presence of sodium or potassium and in conditions of higher pH. Not phosphorylated in presence of calcium ions.

It localises to the cell membrane. The enzyme catalyses Na(+)(in) + ATP + H2O = Na(+)(out) + ADP + phosphate + H(+). The catalysed reaction is K(+)(in) + ATP + H2O = K(+)(out) + ADP + phosphate + H(+). Catalyzes the hydrolysis of ATP coupled with the export of sodium and potassium from the cell. Appears to export potassium more efficiently than sodium. May transport other cations such as lithium. Sodium/potassium efflux ATPases are involved in salt tolerance and maintaining the membrane potential across the plasma membrane in high salinity (Na+) or alkaline (K+) environments. This Marchantia polymorpha (Common liverwort) protein is Sodium/potassium exporting P-type ATPase 1.